A 201-amino-acid chain; its full sequence is Recombination protein RecR (201 aa).

The C4-type zinc-finger motif lies at cysteine 57 to cysteine 72. The region spanning glycine 81–proline 176 is the Toprim domain.

The protein belongs to the RecR family.

May play a role in DNA repair. It seems to be involved in an RecBC-independent recombinational process of DNA repair. It may act with RecF and RecO. The polypeptide is Recombination protein RecR (Actinobacillus pleuropneumoniae serotype 5b (strain L20)).